Consider the following 634-residue polypeptide: Growth hormone receptor (634 aa).

Residues 1-18 (MDLWQLLLTLAVAGSSDA) form the signal peptide. Residues 19–260 (FSGSEATPAF…NPSACEEDFQ (242 aa)) lie on the Extracellular side of the membrane. A glycan (N-linked (GlcNAc...) asparagine) is linked at N46. C56 and C66 are disulfide-bonded. N73 is a glycosylation site (N-linked (GlcNAc...) asparagine). C97 and C108 are disulfide-bonded. A glycan (N-linked (GlcNAc...) asparagine) is linked at N111. The cysteines at positions 122 and 136 are disulfide-linked. Positions 147–250 (PPVGLNWTLL…EVLLITFPQM (104 aa)) constitute a Fibronectin type-III domain. N-linked (GlcNAc...) asparagine glycosylation is found at N152, N157, and N196. The WSXWS motif signature appears at 236–240 (YGKFS). Residues 261-284 (FPWFLIIMFGILGLAVTLFLLIFS) traverse the membrane as a helical segment. The Cytoplasmic portion of the chain corresponds to 285–634 (KQQRIKMLIL…STDQLNKIMP (350 aa)). The segment at 290–375 (KMLILPPVPV…HEKSLNIFGA (86 aa)) is required for JAK2 binding. The short motif at 293 to 301 (ILPPVPVPK) is the Box 1 motif element. Positions 336 to 345 (DSWVEFIELD) match the UbE motif motif. Phosphoserine is present on S337. A phosphotyrosine mark is found at Y483 and Y591.

This sequence belongs to the type I cytokine receptor family. Type 1 subfamily. As to quaternary structure, on growth hormone (GH) binding, forms homodimers and binds JAK2 via a box 1-containing domain. In terms of processing, the soluble form (GHBP) is produced by phorbol ester-promoted proteolytic cleavage at the cell surface (shedding) by ADAM17/TACE. Shedding is inhibited by growth hormone (GH) binding to the receptor probably due to a conformational change in GHR rendering the receptor inaccessible to ADAM17. On GH binding, phosphorylated on tyrosine residues in the cytoplasmic domain by JAK2. Post-translationally, ubiquitinated by the ECS(SOCS2) complex following ligand-binding and phosphorylation by JAK2, leading to its degradation by the proteasome. Regulation by the ECS(SOCS2) complex acts as a negative feedback loop of growth hormone receptor signaling. Ubiquitination is not sufficient for GHR internalization.

Its subcellular location is the cell membrane. The protein resides in the secreted. Functionally, receptor for pituitary gland growth hormone (GH1) involved in regulating postnatal body growth. On ligand binding, couples to the JAK2/STAT5 pathway. The soluble form (GHBP) acts as a reservoir of growth hormone in plasma and may be a modulator/inhibitor of GH signaling. This Bos indicus (Zebu) protein is Growth hormone receptor (GHR).